A 290-amino-acid polypeptide reads, in one-letter code: MAFTLGGRARRLVSATSVHQNGCLHKLQQIGSDRFQLGEAKAIRLLPRRTNMVQELGIREEFMDLNRETETSYDFLDEMRHRFLKFKRQKYLPEIEKFKALAIAQSPKVMVIGCADSRVCPSYVLGFQPGEAFTIRNVANLVTPVQNGPTETNSALEFAVTTLQVENIIVMGHSNCGGIAALMSHQNHQGQHSSLVERWVMNGKAAKLRTQLASSHLSFDEQCRNCEKESIKDSVMNLITYSWIRDRVKRGEVKIHGCYYNLSDCSLEKWRLSSDKTNYGFYISDREIWS.

The N-terminal 20 residues, 1-20, are a transit peptide targeting the mitochondrion; that stretch reads MAFTLGGRARRLVSATSVHQ. S122 carries the post-translational modification Phosphoserine. C226 is modified (S-nitrosocysteine).

It belongs to the beta-class carbonic anhydrase family. In terms of tissue distribution, strongly expressed in aerial tissues including leaves, stems, flowers and siliques, and, to a lower extent, in roots. Accumulates in guard cells.

It is found in the mitochondrion. The enzyme catalyses hydrogencarbonate + H(+) = CO2 + H2O. Its function is as follows. Reversible hydration of carbon dioxide. In Arabidopsis thaliana (Mouse-ear cress), this protein is Beta carbonic anhydrase 6, mitochondrial (BCA6).